We begin with the raw amino-acid sequence, 87 residues long: Co-chaperonin GroES (87 aa).

It belongs to the GroES chaperonin family. In terms of assembly, heptamer of 7 subunits arranged in a ring. Interacts with the chaperonin GroEL.

It is found in the cytoplasm. In terms of biological role, together with the chaperonin GroEL, plays an essential role in assisting protein folding. The GroEL-GroES system forms a nano-cage that allows encapsulation of the non-native substrate proteins and provides a physical environment optimized to promote and accelerate protein folding. GroES binds to the apical surface of the GroEL ring, thereby capping the opening of the GroEL channel. In Campylobacter hominis (strain ATCC BAA-381 / DSM 21671 / CCUG 45161 / LMG 19568 / NCTC 13146 / CH001A), this protein is Co-chaperonin GroES.